The chain runs to 134 residues: uncharacterized protein (134 aa).

The N-terminal stretch at 1–16 is a signal peptide; it reads MAKAVALLLAAIAASA.

This is an uncharacterized protein from Oryza sativa subsp. indica (Rice).